The following is a 750-amino-acid chain: Phosphoribosylformylglycinamidine synthase subunit PurL (750 aa).

His54 is an active-site residue. ATP-binding residues include Tyr57 and Lys101. Glu103 serves as a coordination point for Mg(2+). Substrate contacts are provided by residues 104-107 and Arg126; that span reads SHNH. Residue His105 is the Proton acceptor of the active site. Position 127 (Asp127) interacts with Mg(2+). Gln251 lines the substrate pocket. Residue Asp279 participates in Mg(2+) binding. 323–325 serves as a coordination point for substrate; the sequence is ESQ. Residues Asp509 and Gly546 each coordinate ATP. Mg(2+) is bound at residue Asn547. Residue Ser549 coordinates substrate.

Belongs to the FGAMS family. In terms of assembly, monomer. Part of the FGAM synthase complex composed of 1 PurL, 1 PurQ and 2 PurS subunits.

The protein localises to the cytoplasm. The enzyme catalyses N(2)-formyl-N(1)-(5-phospho-beta-D-ribosyl)glycinamide + L-glutamine + ATP + H2O = 2-formamido-N(1)-(5-O-phospho-beta-D-ribosyl)acetamidine + L-glutamate + ADP + phosphate + H(+). Its pathway is purine metabolism; IMP biosynthesis via de novo pathway; 5-amino-1-(5-phospho-D-ribosyl)imidazole from N(2)-formyl-N(1)-(5-phospho-D-ribosyl)glycinamide: step 1/2. Part of the phosphoribosylformylglycinamidine synthase complex involved in the purines biosynthetic pathway. Catalyzes the ATP-dependent conversion of formylglycinamide ribonucleotide (FGAR) and glutamine to yield formylglycinamidine ribonucleotide (FGAM) and glutamate. The FGAM synthase complex is composed of three subunits. PurQ produces an ammonia molecule by converting glutamine to glutamate. PurL transfers the ammonia molecule to FGAR to form FGAM in an ATP-dependent manner. PurS interacts with PurQ and PurL and is thought to assist in the transfer of the ammonia molecule from PurQ to PurL. The sequence is that of Phosphoribosylformylglycinamidine synthase subunit PurL from Cutibacterium acnes (strain DSM 16379 / KPA171202) (Propionibacterium acnes).